The sequence spans 401 residues: Inositol phosphorylceramide synthase catalytic subunit AUR1 (401 aa).

Residues 1–41 are Cytoplasmic-facing; the sequence is MANPFSRWFLSERPPNCHVADLETSLDPHQTLLKVQKYKPA. The chain crosses the membrane as a helical span at residues 42 to 62; it reads LSDWVHYIFLGSIMLFVFITN. At 63–64 the chain is on the lumenal side; that stretch reads PA. Residues 65–85 traverse the membrane as a helical segment; the sequence is PWIFKILFYCFLGTLFIIPAT. The Cytoplasmic portion of the chain corresponds to 86 to 87; that stretch reads SQ. The helical transmembrane segment at 88–108 threads the bilayer; it reads FFFNALPILTWVALYFTSSYF. The Lumenal segment spans residues 109–155; that stretch reads PDDRRPPITVKVLPAVETILYGDNLSDILATSTNSFLDILAWLPYGL. Asn-132 is a glycosylation site (N-linked (GlcNAc...) asparagine). A helical transmembrane segment spans residues 156 to 176; sequence FHFGAPFVVAAILFVFGPPTV. At 177 to 178 the chain is on the cytoplasmic side; the sequence is LQ. A helical transmembrane segment spans residues 179–199; sequence GYAFAFGYMNLFGVIMQNVFP. At 200–245 the chain is on the lumenal side; the sequence is AAPPWYKILYGLQSANYDMHGSPGGLARIDKLLGINMYTTAFSNSS. The helical transmembrane segment at 246–266 threads the bilayer; it reads VIFGAFPSLHSGCATMEALFF. Over 267 to 268 the chain is Cytoplasmic; it reads CY. Residues 269–289 traverse the membrane as a helical segment; the sequence is CFPKLKPLFIAYVCWLWWSTM. At 290-291 the chain is on the lumenal side; that stretch reads YL. A helical membrane pass occupies residues 292–312; that stretch reads THHYFVDLMAGSVLSYVIFQY. The Cytoplasmic portion of the chain corresponds to 313–401; it reads TKYTHLPIVD…SITSLGVKRA (89 aa). The tract at residues 374-401 is disordered; the sequence is VSPSLFDGSTSVSRSSATSITSLGVKRA. Positions 382 to 395 are enriched in low complexity; the sequence is STSVSRSSATSITS. Ser-392 and Ser-395 each carry phosphoserine.

This sequence belongs to the AUR1 family. As to quaternary structure, component of the inositol phosphorylceramide synthase complex composed of at least AUR1 and KEI1.

The protein localises to the golgi apparatus. It localises to the golgi stack membrane. It carries out the reaction an N-(2R-hydroxy-very-long-chain fatty acyl)-(R)-4-hydroxysphingoid base + a 1,2-diacyl-sn-glycero-3-phospho-(1D-myo-inositol) = a 1D-myo-inositol-1-phospho-N-[(R)-2-hydroxy-very-long-chain fatty acyl]-(R)-4-hydroxysphingoid base + a 1,2-diacyl-sn-glycerol. Its activity is regulated as follows. Inhibited by aureobasidin A (AbA), khafrefungin and rustmicin. Functionally, catalytic component of the inositol phosphorylceramide synthase which catalyzes the addition of a phosphorylinositol group onto ceramide to form inositol phosphorylceramide, an essential step in sphingolipid biosynthesis. The chain is Inositol phosphorylceramide synthase catalytic subunit AUR1 from Saccharomyces cerevisiae (strain ATCC 204508 / S288c) (Baker's yeast).